Reading from the N-terminus, the 655-residue chain is MVLYTTPFPNSCLSALHAVSWALIFPCYWLVDRLLASFIPTTYEKRQRADDPCCLQLFCTVLFTPVYLALLVAALPFAFLGFIFWSPLQSARRPYSYSRLEDKNPAGGAALLSEWKGTGAGKSFCFATANVCLLPDSLARLNNVFNTQARAKEIGQRIRNGAARPQIKIYIDSPTNTSISAASFSSLVSPQGGDGSRAVPGSIKRTASVEYKGDGGRHPSDEAANGPASGEQADGSLEDSCIVRIGGEEGGRPQEADDPAAGSQARNGAGGTPKGQTPNHNQRDGDSGSLGSPSASRESLVKARAGQDSGGSGEPGANSKLLYKTSVVKKAAARRRRHPDEAFDHEVSAFFPANLDFLCLQEVFDKRAAAKLKEQLHGYFEYILYDVGVYGCHGCCNFKCLNSGLFFASRYPVMDVAYHCYPNGCSFDALASKGALFLKVQVGSTPQDQRIVGYIACTHLHAPPEDSAVRCEQLDLLQDWLADFRKSTSSTSTANPEELVVFDVICGDLNFDNCSSDDKLEQQHSLFTRYKDPCRLGPGEEKPWAIGTLLDTNGLYDEDVCTPDNLQKVLESEEGRREYLAFPTSKSPGAGQKGRKDLLKGNGRRIDYMLHAEEGLCPDWKAEVEEFSFITQLSGLTDHLPVAMRLMVSAGEEEA.

Over 1–10 the chain is Cytoplasmic; that stretch reads MVLYTTPFPN. Positions 11-31 form an intramembrane region, helical; that stretch reads SCLSALHAVSWALIFPCYWLV. The Cytoplasmic segment spans residues 32–64; that stretch reads DRLLASFIPTTYEKRQRADDPCCLQLFCTVLFT. 3 S-palmitoyl cysteine lipidation sites follow: C53, C54, and C59. The helical intramembrane region spans 65–85; the sequence is PVYLALLVAALPFAFLGFIFW. Residues 86–655 lie on the Cytoplasmic side of the membrane; it reads SPLQSARRPY…LMVSAGEEEA (570 aa). Residue S178 is modified to Phosphoserine. A disordered region spans residues 209–318; it reads VEYKGDGGRH…SGGSGEPGAN (110 aa). Composition is skewed to basic and acidic residues over residues 211-221 and 246-255; these read YKGDGGRHPSD and GGEEGGRPQE. S289 bears the Phosphoserine mark. E362 is a binding site for Mg(2+). S-palmitoyl cysteine attachment occurs at residues C395 and C396. Catalysis depends on H639, which acts as the Proton acceptor.

The protein belongs to the neutral sphingomyelinase family. It depends on Mg(2+) as a cofactor. In terms of processing, palmitoylated, palmitoylation-deficient proteins are targeted for lysosomal degradation. In terms of tissue distribution, predominantly expressed in brain (at protein level).

The protein localises to the golgi apparatus membrane. Its subcellular location is the cell membrane. It carries out the reaction a sphingomyelin + H2O = phosphocholine + an N-acylsphing-4-enine + H(+). The catalysed reaction is N-(15Z-tetracosenoyl)sphing-4-enine-1-phosphocholine + H2O = N-(15Z-tetracosenoyl)-sphing-4-enine + phosphocholine + H(+). It catalyses the reaction N-(tetracosanoyl)-sphing-4-enine-1-phosphocholine + H2O = N-tetracosanoyl-sphing-4-enine + phosphocholine + H(+). The enzyme catalyses N-(hexadecanoyl)-sphing-4-enine-1-phosphocholine + H2O = N-hexadecanoylsphing-4-enine + phosphocholine + H(+). It carries out the reaction an N-(acyl)-sphingosylphosphocholine + H2O = an N-acyl-sphingoid base + phosphocholine + H(+). The catalysed reaction is 1-hexadecanoyl-sn-glycero-3-phosphocholine + H2O = 1-hexadecanoyl-sn-glycerol + phosphocholine + H(+). It catalyses the reaction 1-O-octadecyl-sn-glycero-3-phosphocholine + H2O = 1-O-octadecyl-sn-glycerol + phosphocholine + H(+). The enzyme catalyses a sphingosylphosphocholine + H2O = a sphingoid base + phosphocholine + H(+). It participates in lipid metabolism; sphingolipid metabolism. Its activity is regulated as follows. Inhibited by nSMase inhibitor GW4869. Binding of anionic phospholipids (APLs) such as phosphatidylserine (PS) and phosphatidic acid (PA) increases enzymatic activity. Catalyzes the hydrolysis of sphingomyelin to form ceramide and phosphocholine. Ceramide mediates numerous cellular functions, such as apoptosis and growth arrest, and is capable of regulating these 2 cellular events independently. Also hydrolyzes sphingosylphosphocholine. Regulates the cell cycle by acting as a growth suppressor in confluent cells. Probably acts as a regulator of postnatal development and participates in bone and dentin mineralization. Binds to anionic phospholipids (APLs) such as phosphatidylserine (PS) and phosphatidic acid (PA) that modulate enzymatic activity and subcellular location. May be involved in IL-1-beta-induced JNK activation in hepatocytes. May act as a mediator in transcriptional regulation of NOS2/iNOS via the NF-kappa-B activation under inflammatory conditions. This is Sphingomyelin phosphodiesterase 3 from Mus musculus (Mouse).